We begin with the raw amino-acid sequence, 840 residues long: Translation initiation factor IF-2 (840 aa).

Residues 1-251 (MTEEKKFSSS…GPAVPATERK (251 aa)) are disordered. Composition is skewed to polar residues over residues 38–50 (DGTN…TPRS) and 65–83 (NRHT…ASRP). Over residues 84-102 (NQSKSQGQGGRNNQRPGSR) the composition is skewed to low complexity. 2 stretches are compositionally biased toward basic and acidic residues: residues 110-135 (PMIR…KTDN) and 158-168 (KPAEQSKKAAE). Residues 169–207 (KPAQTKPKTAETKTTATTTQSGTGKFGGALASGNNSARN) are compositionally biased toward low complexity. A compositionally biased stretch (basic residues) spans 230-239 (GSKKSRRIAA). The tr-type G domain maps to 341–510 (ARPPVVTIMG…LLQAEVLELK (170 aa)). Residues 350-357 (GHVDHGKT) are G1. 350-357 (GHVDHGKT) provides a ligand contact to GTP. Residues 375 to 379 (GITQH) are G2. The interval 396–399 (DTPG) is G3. GTP is bound by residues 396–400 (DTPGH) and 450–453 (NKID). Residues 450–453 (NKID) are G4. The G5 stretch occupies residues 486–488 (SAK).

It belongs to the TRAFAC class translation factor GTPase superfamily. Classic translation factor GTPase family. IF-2 subfamily.

It localises to the cytoplasm. Functionally, one of the essential components for the initiation of protein synthesis. Protects formylmethionyl-tRNA from spontaneous hydrolysis and promotes its binding to the 30S ribosomal subunits. Also involved in the hydrolysis of GTP during the formation of the 70S ribosomal complex. In Leuconostoc citreum (strain KM20), this protein is Translation initiation factor IF-2.